The primary structure comprises 66 residues: DNA gyrase inhibitor YacG (66 aa).

The Zn(2+) site is built by cysteine 9, cysteine 12, cysteine 28, and cysteine 32.

Belongs to the DNA gyrase inhibitor YacG family. In terms of assembly, interacts with GyrB. The cofactor is Zn(2+).

Functionally, inhibits all the catalytic activities of DNA gyrase by preventing its interaction with DNA. Acts by binding directly to the C-terminal domain of GyrB, which probably disrupts DNA binding by the gyrase. The protein is DNA gyrase inhibitor YacG of Pseudomonas fluorescens (strain SBW25).